A 171-amino-acid polypeptide reads, in one-letter code: Crossover junction endodeoxyribonuclease RuvC (171 aa).

Catalysis depends on residues aspartate 7, glutamate 74, and aspartate 147. Mg(2+) is bound by residues aspartate 7, glutamate 74, and aspartate 147.

It belongs to the RuvC family. In terms of assembly, homodimer which binds Holliday junction (HJ) DNA. The HJ becomes 2-fold symmetrical on binding to RuvC with unstacked arms; it has a different conformation from HJ DNA in complex with RuvA. In the full resolvosome a probable DNA-RuvA(4)-RuvB(12)-RuvC(2) complex forms which resolves the HJ. Mg(2+) serves as cofactor.

It localises to the cytoplasm. The enzyme catalyses Endonucleolytic cleavage at a junction such as a reciprocal single-stranded crossover between two homologous DNA duplexes (Holliday junction).. In terms of biological role, the RuvA-RuvB-RuvC complex processes Holliday junction (HJ) DNA during genetic recombination and DNA repair. Endonuclease that resolves HJ intermediates. Cleaves cruciform DNA by making single-stranded nicks across the HJ at symmetrical positions within the homologous arms, yielding a 5'-phosphate and a 3'-hydroxyl group; requires a central core of homology in the junction. The consensus cleavage sequence is 5'-(A/T)TT(C/G)-3'. Cleavage occurs on the 3'-side of the TT dinucleotide at the point of strand exchange. HJ branch migration catalyzed by RuvA-RuvB allows RuvC to scan DNA until it finds its consensus sequence, where it cleaves and resolves the cruciform DNA. This Acidobacterium capsulatum (strain ATCC 51196 / DSM 11244 / BCRC 80197 / JCM 7670 / NBRC 15755 / NCIMB 13165 / 161) protein is Crossover junction endodeoxyribonuclease RuvC.